A 407-amino-acid chain; its full sequence is Arylacetamide deacetylase-like 4 family member 1 (407 aa).

Residues 1–4 lie on the Cytoplasmic side of the membrane; that stretch reads MLYL. A helical; Signal-anchor for type II membrane protein membrane pass occupies residues 5–25; it reads VGFLLATVCLLVLGVNVWVLI. At 26 to 407 the chain is on the lumenal side; it reads DHFLTIDVPP…NAVVSYIKDL (382 aa). The short motif at 119 to 121 is the Involved in the stabilization of the negatively charged intermediate by the formation of the oxyanion hole element; that stretch reads HGG. An N-linked (GlcNAc...) asparagine glycan is attached at asparagine 168. Active-site residues include serine 193, aspartate 347, and histidine 377.

It belongs to the 'GDXG' lipolytic enzyme family.

Its subcellular location is the membrane. This chain is Arylacetamide deacetylase-like 4 family member 1, found in Mus musculus (Mouse).